The chain runs to 190 residues: Peptidyl-tRNA hydrolase (190 aa).

TRNA is bound at residue tyrosine 19. The active-site Proton acceptor is histidine 24. TRNA contacts are provided by tyrosine 72, asparagine 74, and asparagine 121.

It belongs to the PTH family.

It is found in the mitochondrion. The catalysed reaction is an N-acyl-L-alpha-aminoacyl-tRNA + H2O = an N-acyl-L-amino acid + a tRNA + H(+). Its function is as follows. Peptidyl-tRNA hydrolase involved in the recycling of tRNA-Lys from diacetyl-lysyl-tRNA-Lys and is important for mitochondrial function. This Saccharomyces cerevisiae (strain ATCC 204508 / S288c) (Baker's yeast) protein is Peptidyl-tRNA hydrolase (PTH1).